A 60-amino-acid chain; its full sequence is Pepsin-3 (60 aa).

A propeptide spans I1–F35 (activation peptide).

Belongs to the peptidase A1 family.

This is Pepsin-3 from Thunnus orientalis (North Pacific bluefin tuna).